A 376-amino-acid polypeptide reads, in one-letter code: MPADMKTTAPGSDARSSGERDKALNLVLGQIERNFGKGSIMRLGDASRMRVETISTGALTLDLALGGGYPKGRVVEIYGPESSGKTTLTLHAIAEVQKRGGVAAFVDAEHALDPHYAASLGVDVENLLVSQPDTGEMALEIVDQLVRSAAVDIVVIDSVAALTPRSEIEGEMGDVSVGAQARLMSQAMRKITGNIGKSGCTVIFLNQLRLKIGVMYGNPETTTGGNALKFYASVRLDIRRIQTLKKGTEEFGIRAKVKVAKNKVAPPFRIAEFDILFGRGISTVGCLLDLAEETGVVVRKGAWYSYEGDNIGQGRDNTIVWMEQNPEAATTIETLVRQKLNEGTEVTANTVKSLEPAAARAATDKPVETKGANAAA.

79–86 (GPESSGKT) lines the ATP pocket. The interval 357–376 (AAARAATDKPVETKGANAAA) is disordered.

The protein belongs to the RecA family.

The protein resides in the cytoplasm. Its function is as follows. Can catalyze the hydrolysis of ATP in the presence of single-stranded DNA, the ATP-dependent uptake of single-stranded DNA by duplex DNA, and the ATP-dependent hybridization of homologous single-stranded DNAs. It interacts with LexA causing its activation and leading to its autocatalytic cleavage. The protein is Protein RecA of Synechococcus sp. (strain CC9902).